A 173-amino-acid chain; its full sequence is Peptide deformylase (173 aa).

Fe cation contacts are provided by Cys-94 and His-136. Glu-137 is an active-site residue. His-140 serves as a coordination point for Fe cation.

The protein belongs to the polypeptide deformylase family. Requires Fe(2+) as cofactor.

The enzyme catalyses N-terminal N-formyl-L-methionyl-[peptide] + H2O = N-terminal L-methionyl-[peptide] + formate. In terms of biological role, removes the formyl group from the N-terminal Met of newly synthesized proteins. Requires at least a dipeptide for an efficient rate of reaction. N-terminal L-methionine is a prerequisite for activity but the enzyme has broad specificity at other positions. The polypeptide is Peptide deformylase (Desulfosudis oleivorans (strain DSM 6200 / JCM 39069 / Hxd3) (Desulfococcus oleovorans)).